The primary structure comprises 387 residues: 8-amino-7-oxononanoate synthase (387 aa).

Substrate is bound by residues Arg31 and Arg38. Gly118–Tyr119 lines the pyridoxal 5'-phosphate pocket. His143 serves as a coordination point for substrate. Pyridoxal 5'-phosphate contacts are provided by residues Ser191, Asp216–His219, and Thr236–Lys239. Lys239 bears the N6-(pyridoxal phosphate)lysine mark. A substrate-binding site is contributed by Thr348.

It belongs to the class-II pyridoxal-phosphate-dependent aminotransferase family. BioF subfamily. Homodimer. The cofactor is pyridoxal 5'-phosphate.

It catalyses the reaction 6-carboxyhexanoyl-[ACP] + L-alanine + H(+) = (8S)-8-amino-7-oxononanoate + holo-[ACP] + CO2. It participates in cofactor biosynthesis; biotin biosynthesis. Catalyzes the decarboxylative condensation of pimeloyl-[acyl-carrier protein] and L-alanine to produce 8-amino-7-oxononanoate (AON), [acyl-carrier protein], and carbon dioxide. This Methylorubrum populi (strain ATCC BAA-705 / NCIMB 13946 / BJ001) (Methylobacterium populi) protein is 8-amino-7-oxononanoate synthase.